The following is a 370-amino-acid chain: MSIHQSPIKRRESKKIWVGNVAVGGDAPISVQSMTNTRTTDVEATVAQIKSLERVGADIVRVSVPTMDAAEAFKVIKQQVNVPLVADIHFDYRIALKVAEYGVDCLRINPGNIGNEERIRAVVDCAKDKNIPIRIGVNAGSLERDLQEKYGEPTPQALLESALRHVDILDRFNFENFKVSVKASDVFLAVESYRLLAKQIVQPLHLGITEAGGARAGSVKSAVGLGLLLSEGIGDTLRISLAADPVEEVKVGFDILKSLRIRSRGINFIACPTCSRQEIDVIATVNALEQRLEDILTPMDVSIIGCVVNGPGEALISDLGVTGSNKMSGFYLDGVRQKERFDNEKLIDQLEAKIRARVAEQHNRIQIEQI.

The [4Fe-4S] cluster site is built by Cys271, Cys274, Cys306, and Glu313.

Belongs to the IspG family. The cofactor is [4Fe-4S] cluster.

The catalysed reaction is (2E)-4-hydroxy-3-methylbut-2-enyl diphosphate + oxidized [flavodoxin] + H2O + 2 H(+) = 2-C-methyl-D-erythritol 2,4-cyclic diphosphate + reduced [flavodoxin]. It participates in isoprenoid biosynthesis; isopentenyl diphosphate biosynthesis via DXP pathway; isopentenyl diphosphate from 1-deoxy-D-xylulose 5-phosphate: step 5/6. Its function is as follows. Converts 2C-methyl-D-erythritol 2,4-cyclodiphosphate (ME-2,4cPP) into 1-hydroxy-2-methyl-2-(E)-butenyl 4-diphosphate. This Actinobacillus pleuropneumoniae serotype 5b (strain L20) protein is 4-hydroxy-3-methylbut-2-en-1-yl diphosphate synthase (flavodoxin).